Here is a 366-residue protein sequence, read N- to C-terminus: Anhydro-N-acetylmuramic acid kinase (366 aa).

ATP is bound at residue 10–17; the sequence is GTSMDGID.

It belongs to the anhydro-N-acetylmuramic acid kinase family.

The catalysed reaction is 1,6-anhydro-N-acetyl-beta-muramate + ATP + H2O = N-acetyl-D-muramate 6-phosphate + ADP + H(+). Its pathway is amino-sugar metabolism; 1,6-anhydro-N-acetylmuramate degradation. The protein operates within cell wall biogenesis; peptidoglycan recycling. Its function is as follows. Catalyzes the specific phosphorylation of 1,6-anhydro-N-acetylmuramic acid (anhMurNAc) with the simultaneous cleavage of the 1,6-anhydro ring, generating MurNAc-6-P. Is required for the utilization of anhMurNAc either imported from the medium or derived from its own cell wall murein, and thus plays a role in cell wall recycling. The polypeptide is Anhydro-N-acetylmuramic acid kinase (Legionella pneumophila (strain Lens)).